A 286-amino-acid chain; its full sequence is ATP synthase gamma chain (286 aa).

It belongs to the ATPase gamma chain family. In terms of assembly, F-type ATPases have 2 components, CF(1) - the catalytic core - and CF(0) - the membrane proton channel. CF(1) has five subunits: alpha(3), beta(3), gamma(1), delta(1), epsilon(1). CF(0) has three main subunits: a, b and c.

The protein localises to the cell membrane. Produces ATP from ADP in the presence of a proton gradient across the membrane. The gamma chain is believed to be important in regulating ATPase activity and the flow of protons through the CF(0) complex. The polypeptide is ATP synthase gamma chain (Mycoplasma mobile (strain ATCC 43663 / 163K / NCTC 11711) (Mesomycoplasma mobile)).